The following is a 199-amino-acid chain: Recombination protein RecR (199 aa).

The C4-type zinc-finger motif lies at 58-73; that stretch reads CRTCFSLSDQPECRIC. Residues 81–176 form the Toprim domain; it reads SIICVVEKPT…NVTRIASGVP (96 aa).

Belongs to the RecR family.

May play a role in DNA repair. It seems to be involved in an RecBC-independent recombinational process of DNA repair. It may act with RecF and RecO. The protein is Recombination protein RecR of Desulforapulum autotrophicum (strain ATCC 43914 / DSM 3382 / VKM B-1955 / HRM2) (Desulfobacterium autotrophicum).